The following is a 121-amino-acid chain: Large ribosomal subunit protein uL14c (121 aa).

Belongs to the universal ribosomal protein uL14 family. As to quaternary structure, part of the 50S ribosomal subunit.

Its subcellular location is the plastid. The protein resides in the chloroplast. Functionally, binds to 23S rRNA. The chain is Large ribosomal subunit protein uL14c from Tetradesmus obliquus (Green alga).